Here is a 542-residue protein sequence, read N- to C-terminus: Esterase S (542 aa).

The N-terminal stretch at 1-22 (MTQILLPIALLCLFAASTLSNP) is a signal peptide. Cys81 and Cys100 are joined by a disulfide. Asn110 is a glycosylation site (N-linked (GlcNAc...) asparagine). The active-site Acyl-ester intermediate is Ser204. Cysteines 256 and 268 form a disulfide. An N-linked (GlcNAc...) asparagine glycan is attached at Asn396. Cys507 and Cys528 form a disulfide bridge.

This sequence belongs to the type-B carboxylesterase/lipase family. As to quaternary structure, monomer. In terms of tissue distribution, specifically expressed in the ejaculatory bulbs of male.

Its subcellular location is the secreted. The enzyme catalyses a carboxylic ester + H2O = an alcohol + a carboxylate + H(+). Transferred from the ejaculatory bulbs of males to the female genitals upon copulation, plays an important role in the reproductive biology. This is Esterase S (EstS) from Drosophila virilis (Fruit fly).